The chain runs to 97 residues: Gibberellin-regulated protein 5 (97 aa).

The signal sequence occupies residues 1–27 (MANCIRRNALFFLTLLFLLSVSNLVQA).

Belongs to the GASA family. Post-translationally, six disulfide bonds may be present. In terms of tissue distribution, expressed in roots, root hairs, vasculature of cotyledons and hypocotyls, shoot apex, leaf veins, stems, flower receptacles, pollen, filaments, anthers and siliques.

The protein localises to the secreted. The protein resides in the cell wall. It is found in the extracellular space. It localises to the extracellular matrix. Functionally, gibberellin-regulated protein that acts as a negative regulator of gibberellin-induced flowering and stem growth. May inhibit flowering and inflorescence growth via a pathway involving GAI and by enhancing FLC expression and repressing FT and LFY. Acts as a negative regulator in thermotolerance by resogulating both salicylic acid (SA) signaling and heat shock-protein accumulation. The chain is Gibberellin-regulated protein 5 (GASA5) from Arabidopsis thaliana (Mouse-ear cress).